The following is a 1311-amino-acid chain: Zinc finger protein 521 (1311 aa).

Basic residues predominate over residues 1 to 10; it reads MSRRKQAKPR. The interval 1-37 is disordered; the sequence is MSRRKQAKPRSLKDPNCKLEDKTEDGEALDCKKRPED. The span at 11-21 shows a compositional bias: basic and acidic residues; it reads SLKDPNCKLED. The C2H2-type 1; degenerate zinc finger occupies 47 to 67; it reads HSCDSCLQVFESLSDITEHKI. The interval 81–108 is disordered; sequence DPTCSWPASSPSSKDQTSPSHGEGCDFG. A compositionally biased stretch (low complexity) spans 87-102; it reads PASSPSSKDQTSPSHG. 7 C2H2-type zinc fingers span residues 118–140, 146–168, 174–196, 202–224, 246–269, 281–304, and 310–332; these read YPCQ…EQSH, FKCT…IKLH, YHCS…LKTH, YKCA…MQVH, QKCS…AECH, LQCV…EQVH, and NSCS…MDSH. A compositionally biased stretch (low complexity) spans 349–358; that stretch reads VGYTSVSSTT. Residues 349–397 form a disordered region; sequence VGYTSVSSTTPDSNLSVDSSTMVEAAPPIPKSRGRKRAAQQTPDMTGPS. Polar residues-rich tracts occupy residues 359 to 370 and 387 to 397; these read PDSNLSVDSSTM and AQQTPDMTGPS. A C2H2-type 9; degenerate zinc finger spans residues 405–429; sequence YSCIYCNKQLFSSLAVLQIHLKTMH. 3 C2H2-type zinc fingers span residues 437-460, 477-500, and 513-536; these read HICQ…KQVH, YQCN…RCSH, and FFCP…RQVH. Ser-546 is modified (phosphoserine). A C2H2-type 13; atypical zinc finger spans residues 560–585; it reads YSCSYCTNSPIFNSVLKLNKHIKENH. 2 positions are modified to phosphoserine: Ser-605 and Ser-608. 7 C2H2-type zinc fingers span residues 634–656, 664–686, 694–717, 722–745, 752–775, 783–805, and 809–832; these read YICN…LKTH, LTCP…VTIH, YICE…LDMH, FRCT…AVKH, YRCT…KHNH, HKCI…ITTH, and YNCK…REKH. A disordered region spans residues 863–882; the sequence is TNSQESHNSHDGSEEDVDTS. Residues 886-908 form a C2H2-type 21; degenerate zinc finger; that stretch reads YGCDICGAAYTMETLLQNHQLRD. C2H2-type zinc fingers lie at residues 930–952, 959–981, and 1020–1042; these read YKCN…MQTH, YMCP…KVTH, and FRCV…GTFH. A C2H2-type 25; degenerate zinc finger spans residues 1065–1083; sequence YKCASCLKEFRSKQDLVKL. The C2H2-type 26 zinc finger occupies 1138–1161; sequence TRCSSCNVKFESESELQNHIQTIH. Lys-1146 is covalently cross-linked (Glycyl lysine isopeptide (Lys-Gly) (interchain with G-Cter in SUMO2)). Residues 1168–1178 are compositionally biased toward polar residues; sequence SNSTQLKTPQV. The disordered stretch occupies residues 1168-1188; sequence SNSTQLKTPQVSPMPRISPSQ. 4 consecutive C2H2-type zinc fingers follow at residues 1195 to 1217, 1225 to 1247, 1256 to 1279, and 1286 to 1309; these read YQCI…VANH, HECK…LIEH, FKCP…FSAH, and YDCT…MTQH.

This sequence belongs to the krueppel C2H2-type zinc-finger protein family. In terms of assembly, interacts with EBF1. Interacts with SMAD1 and SMAD4. As to expression, predominantly expressed in hematopoietic cells. Present in organs and tissues that contain stem and progenitor cells, myeloid and/or lymphoid: placenta, spleen, lymph nodes, thymus, bone marrow and fetal liver. Within the hematopoietic system, it is abundant in CD34(+) cells but undetectable in mature peripheral blood leukocytes, and its levels rapidly decrease during the differentiation of CD34(+) cells in response to hemopoietins.

It localises to the nucleus. Functionally, transcription factor that can both act as an activator or a repressor depending on the context. Involved in BMP signaling and in the regulation of the immature compartment of the hematopoietic system. Associates with SMADs in response to BMP2 leading to activate transcription of BMP target genes. Acts as a transcriptional repressor via its interaction with EBF1, a transcription factor involved specification of B-cell lineage; this interaction preventing EBF1 to bind DNA and activate target genes. In Homo sapiens (Human), this protein is Zinc finger protein 521 (ZNF521).